A 198-amino-acid chain; its full sequence is Dual specificity protein phosphatase 14 (198 aa).

The Tyrosine-protein phosphatase domain maps to 26–167 (GIAQITSSLF…LIDYESQLFG (142 aa)). C111 serves as the catalytic Phosphocysteine intermediate.

It belongs to the protein-tyrosine phosphatase family. Non-receptor class dual specificity subfamily.

The enzyme catalyses O-phospho-L-tyrosyl-[protein] + H2O = L-tyrosyl-[protein] + phosphate. It carries out the reaction O-phospho-L-seryl-[protein] + H2O = L-seryl-[protein] + phosphate. The catalysed reaction is O-phospho-L-threonyl-[protein] + H2O = L-threonyl-[protein] + phosphate. Involved in the inactivation of MAP kinases. Dephosphorylates ERK, JNK and p38 MAP-kinases. Plays a negative role in TCR signaling by dephosphorylating MAP3K7 adapter TAB1 leading to its inactivation. This chain is Dual specificity protein phosphatase 14 (Dusp14), found in Mus musculus (Mouse).